Here is a 283-residue protein sequence, read N- to C-terminus: Shikimate dehydrogenase (NADP(+)) (283 aa).

Residues 16–18 and T63 each bind shikimate; that span reads SLS. The Proton acceptor role is filled by K67. Residue D79 coordinates NADP(+). The shikimate site is built by N88 and D103. Residues 128-132, A223, and G243 each bind NADP(+); that span reads GAGGA.

The protein belongs to the shikimate dehydrogenase family. Homodimer.

It carries out the reaction shikimate + NADP(+) = 3-dehydroshikimate + NADPH + H(+). The protein operates within metabolic intermediate biosynthesis; chorismate biosynthesis; chorismate from D-erythrose 4-phosphate and phosphoenolpyruvate: step 4/7. Functionally, involved in the biosynthesis of the chorismate, which leads to the biosynthesis of aromatic amino acids. Catalyzes the reversible NADPH linked reduction of 3-dehydroshikimate (DHSA) to yield shikimate (SA). In Xanthomonas campestris pv. campestris (strain 8004), this protein is Shikimate dehydrogenase (NADP(+)).